A 237-amino-acid polypeptide reads, in one-letter code: Ribonuclease 3 (237 aa).

Positions 8–134 (RSALLEKLGV…VIGAVYLDAG (127 aa)) constitute an RNase III domain. Residue E47 coordinates Mg(2+). Residue D51 is part of the active site. Mg(2+)-binding residues include D120 and E123. The active site involves E123. One can recognise a DRBM domain in the interval 161-229 (DPKTSLQEAA…ALSAWTALTN (69 aa)).

The protein belongs to the ribonuclease III family. Homodimer. The cofactor is Mg(2+).

The protein resides in the cytoplasm. The enzyme catalyses Endonucleolytic cleavage to 5'-phosphomonoester.. In terms of biological role, digests double-stranded RNA. Involved in the processing of primary rRNA transcript to yield the immediate precursors to the large and small rRNAs (23S and 16S). Processes some mRNAs, and tRNAs when they are encoded in the rRNA operon. Processes pre-crRNA and tracrRNA of type II CRISPR loci if present in the organism. The chain is Ribonuclease 3 from Leifsonia xyli subsp. xyli (strain CTCB07).